A 205-amino-acid polypeptide reads, in one-letter code: Methylthioribulose-1-phosphate dehydratase (205 aa).

His95 and His97 together coordinate Zn(2+).

Belongs to the aldolase class II family. MtnB subfamily. It depends on Zn(2+) as a cofactor.

The enzyme catalyses 5-(methylsulfanyl)-D-ribulose 1-phosphate = 5-methylsulfanyl-2,3-dioxopentyl phosphate + H2O. It functions in the pathway amino-acid biosynthesis; L-methionine biosynthesis via salvage pathway; L-methionine from S-methyl-5-thio-alpha-D-ribose 1-phosphate: step 2/6. Its function is as follows. Catalyzes the dehydration of methylthioribulose-1-phosphate (MTRu-1-P) into 2,3-diketo-5-methylthiopentyl-1-phosphate (DK-MTP-1-P). The chain is Methylthioribulose-1-phosphate dehydratase from Microcystis aeruginosa (strain NIES-843 / IAM M-2473).